A 435-amino-acid polypeptide reads, in one-letter code: uncharacterized protein (435 aa).

A Phosphoserine modification is found at serine 47. Disordered stretches follow at residues 174–210 (LKKK…DDED) and 290–372 (KAEA…EDNK). Residues 195-210 (NEEDEEDEEDEEDDED) are compositionally biased toward acidic residues. Over residues 290 to 304 (KAEATGEAHSKDVSA) the composition is skewed to basic and acidic residues. The segment covering 308 to 318 (SANTTTSFDET) has biased composition (polar residues). 2 stretches are compositionally biased toward basic and acidic residues: residues 322 to 340 (EDEK…KEAN) and 347 to 361 (VADR…KVND).

The protein resides in the cytoplasm. This is an uncharacterized protein from Saccharomyces cerevisiae (strain ATCC 204508 / S288c) (Baker's yeast).